The primary structure comprises 238 residues: MRLDKYLSKSLHISRKEAKELIREGRVKVSGKVVKQAEYRVKEGEEVEVEGKSVKPKKNVYLMLYKPKGYLSTTEEDKKYPSFLELIREHFPSRKLFSAGRLDVDAEGLLLITDDGELAHRLTHPKWKVEKEYIVRLDRDIGDEELKKLYEVKLEEKPVQLVKAEKLSGDTVKAILTEGRHHVVKRLFKAVGHNVVYLKRTRVGNLRLDENMEPGEWRELTEEEVKELKRLVKYNPQN.

The 64-residue stretch at 1 to 64 folds into the S4 RNA-binding domain; sequence MRLDKYLSKS…KPKKNVYLML (64 aa). Catalysis depends on aspartate 103, which acts as the Nucleophile.

Belongs to the pseudouridine synthase RsuA family.

It carries out the reaction a uridine in RNA = a pseudouridine in RNA. This is an uncharacterized protein from Aquifex aeolicus (strain VF5).